The following is a 258-amino-acid chain: MNKLFSLILALFLVNSAVVSSLDSCSICVDFVGNSLNDLLNIILNSGVIGTCGDLCSAVPGGQIVDTVCDLLCDYVGVDEFIKLISDVDPDPIYICEKISVCKTNDNAAASLDLVQINPQNGTVGGTFTLSIAYTVTNTIATGQLAFNIIDPTGNAFGDAVLLVQQSPEQYTQQFQFQATPSEQESFPNGLYTVQALVCEGSCGSPHPNTYTLANGTTTFTISGADSSSMSGAGSFSGSSQSTQTGAASGSGSGFALF.

An N-terminal signal peptide occupies residues Met-1–Ser-21. The region spanning Leu-22 to Asp-106 is the Saposin B-type domain. 3 cysteine pairs are disulfide-bonded: Cys-25–Cys-102, Cys-28–Cys-96, and Cys-56–Cys-69. N-linked (GlcNAc...) asparagine glycans are attached at residues Asn-121 and Asn-215. A compositionally biased stretch (low complexity) spans Ala-233 to Ala-248. The segment at Ala-233 to Phe-258 is disordered. A compositionally biased stretch (gly residues) spans Ser-249 to Phe-258.

It belongs to the countin family. As to quaternary structure, component of the counting factor (CF) complex, which includes cf60, cf50, cf45-1 and ctnA.

It localises to the secreted. Cell-counting factor that limits the maximum size of the multicellular structure. May down-regulate the expression of gp24, which mediates cell adhesion. This chain is Countin-1 (ctnA), found in Dictyostelium discoideum (Social amoeba).